Consider the following 438-residue polypeptide: GTPase Obg (438 aa).

An Obg domain is found at 2–160; sequence SMFLDTAKIS…RELELELKIL (159 aa). Residues 128 to 147 form a disordered region; the sequence is NIRFATPRNPAPEIAENGEP. Residues 161 to 338 enclose the OBG-type G domain; that stretch reads ADVGLVGFPS…LLDATANLLA (178 aa). GTP-binding positions include 167-174, 192-196, 214-217, 284-287, and 319-321; these read GFPSVGKS, FTTIV, DLPG, NKMD, and STL. Mg(2+) is bound by residues Ser-174 and Thr-194. The 79-residue stretch at 360–438 folds into the OCT domain; it reads GFSEEEKAFE…IGNFEFEFVD (79 aa).

This sequence belongs to the TRAFAC class OBG-HflX-like GTPase superfamily. OBG GTPase family. As to quaternary structure, monomer. Mg(2+) serves as cofactor.

The protein localises to the cytoplasm. An essential GTPase which binds GTP, GDP and possibly (p)ppGpp with moderate affinity, with high nucleotide exchange rates and a fairly low GTP hydrolysis rate. Plays a role in control of the cell cycle, stress response, ribosome biogenesis and in those bacteria that undergo differentiation, in morphogenesis control. The chain is GTPase Obg from Streptococcus uberis (strain ATCC BAA-854 / 0140J).